Here is a 368-residue protein sequence, read N- to C-terminus: tRNA N6-adenosine threonylcarbamoyltransferase (368 aa).

Fe cation is bound by residues H108 and H112. Substrate-binding positions include 149–153, D183, G196, D200, and N301; that span reads LVSGG. D329 is a Fe cation binding site.

The protein belongs to the KAE1 / TsaD family. Fe(2+) serves as cofactor.

Its subcellular location is the cytoplasm. The enzyme catalyses L-threonylcarbamoyladenylate + adenosine(37) in tRNA = N(6)-L-threonylcarbamoyladenosine(37) in tRNA + AMP + H(+). Functionally, required for the formation of a threonylcarbamoyl group on adenosine at position 37 (t(6)A37) in tRNAs that read codons beginning with adenine. Is involved in the transfer of the threonylcarbamoyl moiety of threonylcarbamoyl-AMP (TC-AMP) to the N6 group of A37, together with TsaE and TsaB. TsaD likely plays a direct catalytic role in this reaction. The chain is tRNA N6-adenosine threonylcarbamoyltransferase from Paenarthrobacter aurescens (strain TC1).